The sequence spans 650 residues: DNA mismatch repair protein MutL (650 aa).

Disordered regions lie at residues 358 to 392 and 408 to 448; these read EASQAALPVTPQPRPALTPGHPDPPPQAQLQQPLV and QPRP…QSAA. The segment covering 367–384 has biased composition (pro residues); the sequence is TPQPRPALTPGHPDPPPQ. Over residues 430-444 the composition is skewed to low complexity; that stretch reads PYAPIAAAPVPASEP.

This sequence belongs to the DNA mismatch repair MutL/HexB family.

Functionally, this protein is involved in the repair of mismatches in DNA. It is required for dam-dependent methyl-directed DNA mismatch repair. May act as a 'molecular matchmaker', a protein that promotes the formation of a stable complex between two or more DNA-binding proteins in an ATP-dependent manner without itself being part of a final effector complex. This is DNA mismatch repair protein MutL from Geobacter sp. (strain M21).